The primary structure comprises 494 residues: Inositol-trisphosphate 3-kinase homolog (494 aa).

Residues Ser206, Lys218, 260–262 (EDL), and Asp276 each bind ATP. Substrate contacts are provided by residues Lys278 and 322-329 (KLRYMQFR). Residues Lys346 and Asp426 each coordinate ATP. Lys429 is a binding site for substrate.

It belongs to the inositol phosphokinase (IPK) family. In terms of tissue distribution, expressed in spermatheca.

The catalysed reaction is 1D-myo-inositol 1,4,5-trisphosphate + ATP = 1D-myo-inositol 1,3,4,5-tetrakisphosphate + ADP + H(+). With respect to regulation, unlike mammalian IP3K, may not be regulated by calmodulin. Probably by regulating inositol 1,4,5-trisphosphate levels, negatively regulates posterior body wall muscle contractions required for defecation and let-23 signaling pathway that controls spermathecal dilation and ovulation. May also regulate ovulation downstream of actin cross-linker fln-1. This chain is Inositol-trisphosphate 3-kinase homolog, found in Caenorhabditis elegans.